The chain runs to 499 residues: Glucose-6-phosphate exchanger SLC37A2 (499 aa).

Residues Y21 to R40 form a helical membrane-spanning segment. N-linked (GlcNAc...) asparagine glycosylation is found at N53, N62, and N66. 11 consecutive transmembrane segments (helical) span residues G86–F106, L116–W136, Y143–V163, A187–L207, S208–V228, L302–I322, G334–I354, A362–F382, I391–A411, A434–L454, and G458–A478.

The protein belongs to the major facilitator superfamily. Organophosphate:Pi antiporter (OPA) (TC 2.A.1.4) family.

It localises to the endoplasmic reticulum membrane. The enzyme catalyses D-glucose 6-phosphate(in) + phosphate(out) = D-glucose 6-phosphate(out) + phosphate(in). Functionally, inorganic phosphate and glucose-6-phosphate antiporter. May transport cytoplasmic glucose-6-phosphate into the lumen of the endoplasmic reticulum and translocate inorganic phosphate into the opposite direction. This Xenopus laevis (African clawed frog) protein is Glucose-6-phosphate exchanger SLC37A2.